The primary structure comprises 482 residues: Abscisic acid 8'-hydroxylase 2 (482 aa).

Residues 20 to 40 (PALITLTIVVVVVVLLFKWWL) traverse the membrane as a helical segment. Cys-431 is a binding site for heme.

The protein belongs to the cytochrome P450 family. Heme serves as cofactor. As to expression, mainly expressed in dry seeds. Lower expression in rosette leaves, flowers, siliques and stems. Not expressed in roots. Expressed in both endosperm and vascular tissues of embryo during the seed development and in cortex and endodermis in germinating embryo.

It is found in the membrane. It carries out the reaction 2-cis-(+)-abscisate + reduced [NADPH--hemoprotein reductase] + O2 = (+)-8'-hydroxyabscisate + oxidized [NADPH--hemoprotein reductase] + H2O + H(+). The protein operates within plant hormone degradation; abscisic acid degradation. Functionally, involved in the oxidative degradation of abscisic acid, but not in the isomerization of the produced 8'-hydroxyabscisic acid (8'-OH-ABA) to (-)-phaseic acid (PA). Involved in the control of seed dormancy and germination. In Arabidopsis thaliana (Mouse-ear cress), this protein is Abscisic acid 8'-hydroxylase 2 (CYP707A2).